The chain runs to 83 residues: Small ribosomal subunit protein eS21 (83 aa).

Belongs to the eukaryotic ribosomal protein eS21 family. Component of the 40S small ribosomal subunit. Interacts with sta.

Its subcellular location is the cytoplasm. The protein localises to the cytosol. It is found in the rough endoplasmic reticulum. May be an associated component of the ribosome rather than a core structural subunit. May act as a translation initiation factor. Has a role in regulation of cell proliferation in the hematopoietic organs and the imaginal disks of larva. The chain is Small ribosomal subunit protein eS21 (RpS21) from Drosophila ananassae (Fruit fly).